Reading from the N-terminus, the 587-residue chain is Kelch-like protein 3 (587 aa).

The interval 1–24 (MEGESVKPSPQPTAQAEDEEKNRR) is disordered. Residues 50–117 (CDVMIVAEDV…IYTAEIEVTE (68 aa)) form the BTB domain. A BACK domain is found at 152–254 (CLGIRAFADV…PRDYLVQTVE (103 aa)). Residue threonine 295 is modified to Phosphothreonine. Kelch repeat units lie at residues 302–347 (VMIV…FMAG), 348–394 (HVYA…VLND), 396–441 (LYAV…VVEG), 442–490 (KLYA…VLSG), 491–537 (QLYA…AVNG), and 539–585 (LYVV…VIHK). Position 375 is a phosphothreonine (threonine 375). Serine 376 and serine 433 each carry phosphoserine.

The protein belongs to the KLHL3 family. Homodimer. Component of the BCR(KLHL3) E3 ubiquitin ligase complex, at least composed of CUL3 and KLHL3 and RBX1. Interacts with CLDN8. Phosphorylation at Ser-433 by PKA or PKC decreases the interaction with WNK1 and WNK4, leading to inhibit their degradation by the BCR(KLHL3) complex. Phosphorylated at Ser-433 by PKC in response to angiotensin II signaling, decreasing ability to promote degradation of WNK1 and WNK4, leading to activation of Na-Cl cotransporter SLC12A3/NCC. Phosphorylation at Ser-433 is increased by insulin. Dephosphorylated at Ser-433 by calcineurin PPP3CA, promoting degradation of WNK1 and WNK4. In terms of tissue distribution, present at high level in brain and kidney (at protein level). Weakly expressed in other tissues. In kidney, predominantly localizes to the distal convoluted tubule (DCT) and collecting duct, with apical localization in the DCT (at protein level).

It is found in the cytoplasm. It localises to the cytosol. The protein resides in the cytoskeleton. It participates in protein modification; protein ubiquitination. Functionally, substrate-specific adapter of a BCR (BTB-CUL3-RBX1) E3 ubiquitin ligase complex that acts as a regulator of ion transport in the distal nephron. The BCR(KLHL3) complex acts by mediating ubiquitination and degradation of WNK1 and WNK4, two activators of Na-Cl cotransporter SLC12A3/NCC in distal convoluted tubule cells of kidney, thereby regulating NaCl reabsorption. The BCR(KLHL3) complex also mediates ubiquitination of CLDN8, a tight-junction protein required for paracellular chloride transport in the kidney, leading to its degradation. In Mus musculus (Mouse), this protein is Kelch-like protein 3.